We begin with the raw amino-acid sequence, 224 residues long: Peptidyl-prolyl cis-trans isomerase FKBP3 (224 aa).

Alanine 2 carries the N-acetylalanine modification. The residue at position 36 (serine 36) is a Phosphoserine. Residues 87-119 (NVKLNEDKPKETKSEETPDEGPPKYTKSVLKKG) are disordered. Over residues 89–102 (KLNEDKPKETKSEE) the composition is skewed to basic and acidic residues. An N6-acetyllysine modification is found at lysine 99. A PPIase FKBP-type domain is found at 128 to 224 (GDVVHCWYTG…IFEVELVDID (97 aa)). Serine 152 carries the post-translational modification Phosphoserine. At lysine 170 the chain carries N6-acetyllysine.

The protein belongs to the FKBP-type PPIase family.

The protein resides in the nucleus. The enzyme catalyses [protein]-peptidylproline (omega=180) = [protein]-peptidylproline (omega=0). Inhibited preferentially by rapamycin over FK506. Its function is as follows. FK506- and rapamycin-binding proteins (FKBPs) constitute a family of receptors for the two immunosuppressants which inhibit T-cell proliferation by arresting two distinct cytoplasmic signal transmission pathways. PPIases accelerate the folding of proteins. The polypeptide is Peptidyl-prolyl cis-trans isomerase FKBP3 (FKBP3) (Oryctolagus cuniculus (Rabbit)).